A 1681-amino-acid chain; its full sequence is Meiosis regulator and mRNA stability factor 1 (1681 aa).

One can recognise an NYN domain in the interval 340–477; sequence IGVFWDIENC…ALLHHAHELI (138 aa). Disordered regions lie at residues 576-595 and 638-717; these read VNET…PKKV and QMQS…DVVF. The segment covering 638-647 has biased composition (polar residues); it reads QMQSKSNKTS. A compositionally biased stretch (basic and acidic residues) spans 648-658; it reads QQEKDKKRNGD. Positions 659–690 are enriched in polar residues; the sequence is KQGTLSQSSPLCTNQMLQTARNVGTDNTASKS. The span at 692–715 shows a compositional bias: basic and acidic residues; sequence QKRDDTTRKSNADSQKEQKNKEDV. Residues 779–858 enclose the RRM domain; it reads ADIQIGNLDY…KRIQVSLATG (80 aa). 8 HTH OST-type domains span residues 863–937, 991–1067, 1087–1161, 1163–1238, 1247–1321, 1323–1398, 1399–1472, and 1474–1548; these read SLSL…SPMG, SLKT…HNKP, QLIQ…LTHR, QVKR…IPKR, RTKQ…LTEM, RIKA…INRK, SLRS…SVQL, and SLYV…LKND. The span at 1637–1648 shows a compositional bias: polar residues; that stretch reads EPSTQNICPQES. A disordered region spans residues 1637–1662; sequence EPSTQNICPQESKSTKELPESPVKRQ. Over residues 1649–1659 the composition is skewed to basic and acidic residues; sequence KSTKELPESPV.

It localises to the peroxisome. Essential regulator of oogenesis required for female meiotic progression to repress transposable elements and preventing their mobilization, which is essential for the germline integrity. This chain is Meiosis regulator and mRNA stability factor 1, found in Xenopus tropicalis (Western clawed frog).